The sequence spans 386 residues: GLABROUS1 enhancer-binding protein-like 1 (386 aa).

Disordered stretches follow at residues 1 to 58 (MVTP…KKKK) and 197 to 314 (ESGE…DDDD). Residues 216–226 (EEIRDNDETAR) show a composition bias toward basic and acidic residues. Residues 221–285 (NDETARKAQQ…LKEHEEVANT (65 aa)) are a coiled coil. A compositionally biased stretch (polar residues) spans 257 to 267 (DNNGTTQIAQQ). Residues 291 to 300 (NGAAKTTENG) show a composition bias toward low complexity. The tract at residues 354–375 (LSDEWKALCVEERRLNIKKLRF) is non-canonical leucine-zipper.

The protein belongs to the GeBP family. Homo- and heterodimers. Interacts with GEBP, GPL2 and GPL3. Interacts with GEBP. In terms of tissue distribution, expressed in the apical meristem and young leaf primordia. Detected in the vascular tissues of cotyledons and leaves, in hydathodes and at the base of flowers and siliques, but not in roots.

It localises to the nucleus. Functionally, probable transcription factor. May play redundant roles with GEBP and GPL2 in cytokinin responses by regulating the transcript levels of type-A ARR response genes. Involved in stress responses. Plays a repressive role in cell expansion by counteracting the positive role of CPR5 in this process, but does not regulate cell proliferation or endoreduplication. The polypeptide is GLABROUS1 enhancer-binding protein-like 1 (Arabidopsis thaliana (Mouse-ear cress)).